Reading from the N-terminus, the 367-residue chain is tRNA pseudouridine synthase D (367 aa).

D80 functions as the Nucleophile in the catalytic mechanism. Positions 156–316 constitute a TRUD domain; the sequence is GIPNWFGEQR…LKQERRALRL (161 aa).

This sequence belongs to the pseudouridine synthase TruD family.

The catalysed reaction is uridine(13) in tRNA = pseudouridine(13) in tRNA. In terms of biological role, responsible for synthesis of pseudouridine from uracil-13 in transfer RNAs. This Xanthomonas campestris pv. campestris (strain B100) protein is tRNA pseudouridine synthase D.